The primary structure comprises 206 residues: Sclerostin domain-containing protein 1 (206 aa).

An N-terminal signal peptide occupies residues 1 to 22 (MLLSAIHFYGLLLACTFTRSYS). The segment at 40-68 (APASPSSNSTLNQARNGGRHYAGTGSDRN) is disordered. Residues 43-54 (SPSSNSTLNQAR) are compositionally biased toward polar residues. A glycan (N-linked (GlcNAc...) asparagine) is linked at Asn47. Disulfide bonds link Cys75/Cys133, Cys89/Cys147, Cys100/Cys163, and Cys104/Cys165. Residues 75–170 (CRELRSTKYI…TACKCKRYTR (96 aa)) enclose the CTCK domain. Asn173 is a glycosylation site (N-linked (GlcNAc...) asparagine). The segment at 176–206 (SHNFEGTSQAKPVQHHKERKRASKSSKHSTS) is disordered. Positions 188 to 206 (VQHHKERKRASKSSKHSTS) are enriched in basic residues.

Belongs to the sclerostin family. Interacts with LRP6.

It is found in the secreted. In terms of biological role, can activate or inhibit Wnt signaling in a context-dependent manner. Activates the canonical Wnt pathway whereby acts through Disheveled proteins and beta-catenin. Antagonises Wnt signaling through the canonical pathways presumably by blocking accessibility of certain WNTs to their receptors. Induces posterior neural markers via components of the canonical Wnt pathway. This Gallus gallus (Chicken) protein is Sclerostin domain-containing protein 1 (SOSTDC1).